Consider the following 158-residue polypeptide: uncharacterized protein (158 aa).

The signal sequence occupies residues 1 to 16; that stretch reads MFRPILILTILSCVLA. Asparagine 122 carries N-linked (GlcNAc...) asparagine glycosylation.

This is an uncharacterized protein from Caenorhabditis elegans.